The chain runs to 323 residues: Formimidoylglutamase (323 aa).

6 residues coordinate Mn(2+): histidine 131, aspartate 157, histidine 159, aspartate 161, cysteine 245, and aspartate 247.

The protein belongs to the arginase family. It depends on Mn(2+) as a cofactor.

It carries out the reaction N-formimidoyl-L-glutamate + H2O = formamide + L-glutamate. It functions in the pathway amino-acid degradation; L-histidine degradation into L-glutamate; L-glutamate from N-formimidoyl-L-glutamate (hydrolase route): step 1/1. Functionally, catalyzes the conversion of N-formimidoyl-L-glutamate to L-glutamate and formamide. The sequence is that of Formimidoylglutamase from Geobacillus kaustophilus (strain HTA426).